We begin with the raw amino-acid sequence, 148 residues long: Lipid droplet organization protein LDO16 (148 aa).

Residues 1 to 7 (MVSTATF) are Cytoplasmic-facing. Residues 8 to 28 (FFFVYLTLFVVIGFFSSLFII) form a helical membrane-spanning segment. Residue Pro29 is a topological domain, lumenal. A helical membrane pass occupies residues 30–50 (LLGISFVFAIGVVSFGFCSNM). Residues 51-148 (SFKMAQLIYV…NKAGNKFQLS (98 aa)) lie on the Cytoplasmic side of the membrane. The tract at residues 83 to 110 (QEPQEPLSTLRPVSNPTIPSPLRQTARP) is disordered. Over residues 93–109 (RPVSNPTIPSPLRQTAR) the composition is skewed to polar residues. Ser102 carries the post-translational modification Phosphoserine.

This sequence belongs to the OSW5 family. As to quaternary structure, interacts specifically with the seipin complex FLD1-LDB16. Only a fraction appears to associate with the seipin core components, suggesting that it may be an ancillary subunit of the complex. Found to interact with many mitochondrial and peroxisomal proteins.

The protein resides in the endoplasmic reticulum membrane. The protein localises to the lipid droplet. Its function is as follows. Involved in lipid droplet (LD) organization. Functions primarily upon nutrient depletion, facilitating LD consumption by lipophagy. Required for correct LD distribution during entry into stationary phase, where LDs accumulate at nucleus-vacuole junction (NVJ) contact sites. Involved in membrane interaction in a manner similar to those of SNARE proteins, binding to partners present in mitochondria or peroxisomes. Its partner on the mitochondrion side might be TOM22, a mitochondrial outer membrane protein, linking lipid droplets and mitochondria by protein-protein interaction. Involved in spore wall assembly. The sequence is that of Lipid droplet organization protein LDO16 from Saccharomyces cerevisiae (strain ATCC 204508 / S288c) (Baker's yeast).